We begin with the raw amino-acid sequence, 117 residues long: Large ribosomal subunit protein bL20c (117 aa).

Belongs to the bacterial ribosomal protein bL20 family.

It is found in the plastid. The protein localises to the chloroplast. Functionally, binds directly to 23S ribosomal RNA and is necessary for the in vitro assembly process of the 50S ribosomal subunit. It is not involved in the protein synthesizing functions of that subunit. This is Large ribosomal subunit protein bL20c from Gossypium hirsutum (Upland cotton).